A 424-amino-acid chain; its full sequence is Glutamyl-tRNA reductase (424 aa).

Substrate contacts are provided by residues 49–52, S105, 110–112, and Q116; these read TCNR and EPQ. C50 (nucleophile) is an active-site residue. 185-190 provides a ligand contact to NADP(+); that stretch reads GSGETA.

This sequence belongs to the glutamyl-tRNA reductase family. Homodimer.

The enzyme catalyses (S)-4-amino-5-oxopentanoate + tRNA(Glu) + NADP(+) = L-glutamyl-tRNA(Glu) + NADPH + H(+). It functions in the pathway porphyrin-containing compound metabolism; protoporphyrin-IX biosynthesis; 5-aminolevulinate from L-glutamyl-tRNA(Glu): step 1/2. Catalyzes the NADPH-dependent reduction of glutamyl-tRNA(Glu) to glutamate 1-semialdehyde (GSA). The sequence is that of Glutamyl-tRNA reductase from Legionella pneumophila (strain Corby).